The primary structure comprises 429 residues: Choline kinase A2 (429 aa).

ATP-binding positions include lysine 82 to methionine 88, arginine 111, glutamate 152 to proline 158, and glutamine 257. Substrate is bound at residue glycine 84–serine 86. Ca(2+) is bound at residue glutamate 258. Residue aspartate 301 participates in ATP binding. Positions 320 and 323 each coordinate Ca(2+).

Belongs to the choline/ethanolamine kinase family. In terms of assembly, homodimer. A small proportion exists as higher oligomers. Requires Mg(2+) as cofactor.

The enzyme catalyses choline + ATP = phosphocholine + ADP + H(+). The catalysed reaction is ethanolamine + ATP = phosphoethanolamine + ADP + H(+). It functions in the pathway phospholipid metabolism; phosphatidylcholine biosynthesis; phosphocholine from choline: step 1/1. The protein operates within phospholipid metabolism; phosphatidylethanolamine biosynthesis; phosphatidylethanolamine from ethanolamine: step 1/3. Inhibited by Ca(2+). Mild inhibition by high levels of Mg(2+)(&gt;10 mM). Catalyzes the first step in phosphatidylcholine biosynthesis. May contribute to phosphatidylethanolamine biosynthesis. Phosphorylates choline and ethanolamine but the activity is much higher with choline. In Caenorhabditis elegans, this protein is Choline kinase A2.